A 104-amino-acid chain; its full sequence is Replication restart protein PriB (104 aa).

The SSB domain occupies 1-101; it reads MTNRLVLSGT…LHAEQIELID (101 aa).

Belongs to the PriB family. In terms of assembly, homodimer. Interacts with PriA and DnaT. Component of the replication restart primosome. Primosome assembly occurs via a 'hand-off' mechanism. PriA binds to replication forks, subsequently PriB then DnaT bind; DnaT then displaces ssDNA to generate the helicase loading substrate.

Its function is as follows. Involved in the restart of stalled replication forks, which reloads the replicative helicase on sites other than the origin of replication; the PriA-PriB pathway is the major replication restart pathway. During primosome assembly it facilitates complex formation between PriA and DnaT on DNA; stabilizes PriA on DNA. Stimulates the DNA unwinding activity of PriA helicase. This is Replication restart protein PriB from Shigella dysenteriae serotype 1 (strain Sd197).